We begin with the raw amino-acid sequence, 612 residues long: Chaperone protein DnaK (612 aa).

Thr173 carries the post-translational modification Phosphothreonine; by autocatalysis. A disordered region spans residues 576 to 612 (AAKQAQAQQDGGAGAKKADDNVVDAEYEEVNDDKDQK). The segment covering 596 to 612 (NVVDAEYEEVNDDKDQK) has biased composition (acidic residues).

The protein belongs to the heat shock protein 70 family.

Its function is as follows. Acts as a chaperone. The protein is Chaperone protein DnaK of Bacillus licheniformis (strain ATCC 14580 / DSM 13 / JCM 2505 / CCUG 7422 / NBRC 12200 / NCIMB 9375 / NCTC 10341 / NRRL NRS-1264 / Gibson 46).